A 370-amino-acid chain; its full sequence is Putative agmatine deiminase (370 aa).

Positions 1–19 (MTNMNVDATQLTTKPSQDG) are enriched in polar residues. The interval 1 to 20 (MTNMNVDATQLTTKPSQDGF) is disordered. Cysteine 361 (amidino-cysteine intermediate) is an active-site residue.

It belongs to the agmatine deiminase family.

It catalyses the reaction agmatine + H2O = N-carbamoylputrescine + NH4(+). In Shewanella frigidimarina (strain NCIMB 400), this protein is Putative agmatine deiminase.